The chain runs to 4545 residues: MLTPPLLLLLPLLSALVAGATMDAPKTCSPKQFACRDQITCISKGWRCDGERDCPDGSDEAPEICPQSKAQRCPPNEHSCLGTELCVPMSRLCNGIQDCMDGSDEGAHCRELRVNCSRMGCQHHCVPTPSGPTCYCNNSFQLQADGKTCKDFDECSVYGTCSQLCTNTDGSFTCGCVEGYLLQPDNRSCKAKNEPVDRPPVLLIANSQNILATYLSGAQVSTITPTSTRQTTAMDFSYANETVCWVHVGDSAAQTQLKCARMPSLKGFVDEHTINISLSLHHVEQMAIDWLTGNFYFVDDIDDRIFVCNRNGDTCVTLLDLELYNPKGIALDPAMGKVFFTDYGQIPKVERCDMDGQNRTKLVDSKIVFPHGITLDLVSRLVYWADAYLDYIEVVDYEGKGRQTIIQGILIEHLYGLTVFENYLYATNSDNANTQQKTSVIRVNRFNSTEYQVVTRVDKGGALHIYHQRRQPRVRSHACENDQYGKPGGCSDICLLANSHKARTCRCRSGFSLGSDGKSCKKPEHELFLVYGKGRPGIIRGMDMGAKVPDEHMIPIENLMNPRALDFHAETGFIYFADTTSYLIGRQKIDGTERETILKDGIHNVEGVAVDWMGDNLYWTDDGPKKTISVARLEKAAQTRKTLIEGKMTHPRAIVVDPLNGWMYWTDWEEDPKDSRRGRLERAWMDGSHRDIFVTSKTVLWPNGLSLDIPAGRLYWVDAFYDRIETILLNGTDRKIVYEGPELNHAFGLCHHGNYLFWTEYRSGSVYRLERGVAGAQPTVTLLRSERPPIFEIRMYDAQQQQVGTNKCRVNNGGCSSLCLATPGSRQCACAEDQVLDADGVTCLANPSYVPPPQCQPGEFACANNRCIQERWKCDGDNDCLDNSDEAPALCHQHTCPSDRFKCENNRCIPNRWLCDGDNDCGNSEDESNATCSARTCPPNQFSCASGRCIPISWTCDLDDDCGDRSDESASCAYPTCFPLTQFTCNNGRCININWRCDNDNDCGDNSDEAGCSHSCSSTQFKCNSGRCIPEHWTCDGDNDCGDYSDETHANCTNQATRPPGGCHSDEFQCRLDGLCIPLRWRCDGDTDCMDSSDEKGCEGVTHVCDPNVKFGCKDSARCISKAWVCDGDSDCEDNSDEENCEALACRPPSHPCANNTSVCLSPDKLCDGKDDCGDGSDEGELCDQCSLNNGGCSHNCSVAPGEGIVCSCPLGMELGPDNHTCQIQSYCAKHLKCSQKCDQNKFSVKCSCYEGWVLEPDGESCRSLDPFKPFIIFSNRHEIRRIDLHKGDYSVLVPGLRNTIALDFHLSQSALYWTDVVEDKIYRGKLLDNGALTSFEVVIQYGLATPEGLAVDWIAGNIYWVESNLDQIEVAKLDGTLRTTLLAGDIEHPRAIALDPRDGILFWTDWDASLPRIEAASMSGAGRRTIHRETGSGGWPNGLTVDYLEKRILWIDARSDAIYSARYDGSGHMEVLRGHEFLSHPFAVTLYGGEVYWTDWRTNTLAKANKWTGHNVTVVQRTNTQPFDLQVYHPSRQPMAPNPCEANGGRGPCSHLCLINYNRTVSCACPHLMKLHNDNTTCYEFKKFLLYARQMEIRGVDLDAPYYNYIISFTVPDIDNVTVLDYDAREQRVYWSDVRTQAIKRAFINGTGVETVVSADLPNAHGLAVDWVSRNLFWTSYDTNKKQINVARLDGSFKNAVVQGLEQPHGLVVHPLRGKLYWTDGDNISMVNMDGSNRTLLFSGQKGPVGLAIDFPESKLYWISSGNHTINRCNLDGSELEVIDTMRSQLGKATALAIMGDKLWWADQVSEKMGTCNKADGSGSVVLRNSTTLVMHMKVYDESIQLEHEGTNPCSVNNGDCSQLCLPTSETTRSCMCTAGYSLRSGQQACEGVGSFLLYSVHEGIRGIPLDPNDKSDALVPVSGTSLAVGIDFHAENDTIYWVDMGLSTISRAKRDQTWREDVVTNGIGRVEGIAVDWIAGNIYWTDQGFDVIEVARLNGSFRYVVISQGLDKPRAITVHPEKGYLFWTEWGHYPRIERSRLDGTERVVLVNVSISWPNGISVDYQGGKLYWCDARMDKIERIDLETGENREVVLSSNNMDMFSVSVFEDFIYWSDRTHANGSIKRGCKDNATDSVPLRTGIGVQLKDIKVFNRDRQKGTNVCAVANGGCQQLCLYRGGGQRACACAHGMLAEDGASCREYAGYLLYSERTILKSIHLSDERNLNAPVQPFEDPEHMKNVIALAFDYRAGTSPGTPNRIFFSDIHFGNIQQINDDGSGRTTIVENVGSVEGLAYHRGWDTLYWTSYTTSTITRHTVDQTRPGAFERETVITMSGDDHPRAFVLDECQNLMFWTNWNELHPSIMRAALSGANVLTLIEKDIRTPNGLAIDHRAEKLYFSDATLDKIERCEYDGSHRYVILKSEPVHPFGLAVYGEHIFWTDWVRRAVQRANKYVGSDMKLLRVDIPQQPMGIIAVANDTNSCELSPCRINNGGCQDLCLLTHQGHVNCSCRGGRILQEDFTCRAMNSSCRAQDEFECANGECISFSLTCDGVSHCKDKSDEKPSYCNSRRCKKTFRQCNNGRCVSNMLWCNGVDDCGDGSDEIPCNKTACGVGEFRCRDGSCIGNSSRCNQFVDCEDASDEMNCSATDCSSYFRLGVKGVLFQPCERTSLCYAPSWVCDGANDCGDYSDERDCPGVKRPRCPLNYFACPSGRCIPMSWTCDKEDDCENGEDETHCNKFCSEAQFECQNHRCISKQWLCDGSDDCGDGSDEAAHCEGKTCGPSSFSCPGTHVCVPERWLCDGDKDCADGADESISAGCLYNSTCDDREFMCQNRLCIPKHFVCDHDRDCADGSDESPECEYPTCGPNEFRCANGRCLSSRQWECDGENDCHDHSDEAPKNPHCTSPEHKCNASSQFLCSSGRCVAEALLCNGQDDCGDGSDERGCHVNECLSRKLSGCSQDCEDLKIGFKCRCRPGFRLKDDGRTCADVDECSTTFPCSQLCINTHGSYKCLCVEGYAPRGGDPHSCKAVTDEEPFLIFANRYYLRKLNLDGSNYTLLKQGLNNAVALDFDYRGQMIYWTDVTTQGSMIRRMHLNGSNVQVLHRTGLSNPDGLAVDWVGGNLYWCDKGRDTIEVSKLNGAYRTVLVSSGLREPRALVVDVQNGYLYWTDWGDHSLIGRIGMDGSGRSIIVDTKITWPNGLTVDYVTERIYWADAREDYIEFASLDGSNRHVVLSQDIPHIFALTLFEDYVYWTDWETKSINRAHKTTGANKTLLISTLHRPMDLHVFHALRQPDVPNHPCKVNNGGCSNLCLLSPGGGHKCACPTNFYLGGDGRTCVSNCTASQFVCKNDKCIPFWWKCDTEDDCGDHSDEPPDCPEFKCRPGQFQCSTGICTNPAFICDGDNDCQDNSDEANCDIHVCLPSQFKCTNTNRCIPGIFRCNGQDNCGDGEDERDCPEVTCAPNQFQCSITKRCIPRVWVCDRDNDCVDGSDEPANCTQMTCGVDEFRCKDSGRCIPARWKCDGEDDCGDGSDEPKEECDERTCEPYQFRCKNNRCVPGRWQCDYDNDCGDNSDEESCTPRPCSESEFSCANGRCIAGRWKCDGDHDCADGSDEKDCTPRCDMDQFQCKSGHCIPLRWRCDADADCMDGSDEEACGTGVRTCPLDEFQCNNTLCKPLAWKCDGEDDCGDNSDENPEECTRFQCPPNRPFRCKNDRVCLWIGRQCDGTDNCGDGTDEEDCEPPTAQNPHCKDKKEFLCRNQRCLSSSLRCNMFDDCGDGSDEEDCSIDPKLTSCATNASMCGDEARCVRTEKAAYCACRPGFHTVPGQPGCQDINECLRFGTCSQLCNNTKGGHLCSCARNFMKTHNTCKAEGSEYQVLYIADDNEIRSLFPGHPHSAYEQAFQGDESVRIDAMDVHVKAGRVYWTNWHTGTISYRSLPPAAPPTTSNRHRRQIDRGVTHLNISGLKMPRGIAIDWVAGNVYWTDSGRDVIEVAQMKGENRKTLISGMIDEPHAIVVDPLRGTMYWSDWGNHPKIETAAMDGTLRETLVQDNIQWPTGLAVDYHNERLYWADAKLSVIGSIRLNGTDPIVAVDSKRGLSHPFSIDVFEDYIYGVTYINNRVFKIHKFGHSPLINLTGGLSHASDVVLYHQHKQPEVTNPCDRKKCEWLCLLSPSGPVCTCPNGKRLDNGTCVPVPSPTPPPDAPRPGTCTLQCFNGGSCFLNARRQPKCRCQPRYTGDKCELDQCWEYCHNGGTCAASPSGMPTCRCPTGFTGPRCTQQVCAGYCANNSTCTVNQGNQPQCRCLPGFLGDRCQYRQCSGFCENFGTCQMAADGSRQCRCTVYFEGTRCEVNKCSRCLQGACVVNKQTGDVTCNCTDGRVAPSCLTCIDHCSNGGSCTMNSKMMPECQCPPHMTGPRCEEQVVSQQQPGHMTSILIPLLLLLLLLLVAGVVFWYKRRVRGAKGFQHQRMTNGAMNVEIGNPTYKMYEGGEPDDVGGLLDADFALDPDKPTNFTNPVYATLYMGGHGSRHSLASTDEKRELLGRGPEDEIGDPLA.

The N-terminal stretch at 1–19 is a signal peptide; it reads MLTPPLLLLLPLLSALVAG. Residues 20 to 4424 are Extracellular-facing; sequence ATMDAPKTCS…SQQQPGHMTS (4405 aa). LDL-receptor class A domains are found at residues 27–66 and 72–110; these read TCSP…EICP and RCPP…AHCR. 6 disulfide bridges follow: Cys28–Cys41, Cys35–Cys54, Cys48–Cys65, Cys73–Cys86, Cys80–Cys99, and Cys93–Cys109. Residues Asn115, Asn137, Asn186, Asn240, and Asn275 are each glycosylated (N-linked (GlcNAc...) asparagine). LDL-receptor class B repeat units lie at residues 293-335, 336-379, and 380-423; these read GNFY…DPAM, GKVF…DLVS, and RLVY…FENY. N-linked (GlcNAc...) asparagine glycosylation is present at Asn358. N-linked (GlcNAc...) asparagine glycosylation is present at Asn447. LDL-receptor class B repeat units follow at residues 572–614, 615–660, 661–711, and 712–755; these read GFIY…DWMG, DNLY…DPLN, GWMY…DIPA, and GRLY…HGNY. Residues 639–671 form an HAT 1 repeat; sequence TRKTLIEGKMTHPRAIVVDPLNGWMYWTDWEED. N-linked (GlcNAc...) asparagine glycosylation occurs at Asn730. LDL-receptor class A domains are found at residues 854-892, 895-933, 936-973, 976-1013, 1015-1053, 1062-1099, 1104-1142, and 1145-1184; these read QCQP…ALCH, TCPS…ATCS, TCPP…ASCA, TCFP…AGCS, SCSS…ANCT, GCHS…KGCE, VCDP…ENCE, and ACRP…ELCD. Disulfide bonds link Cys855–Cys867, Cys862–Cys880, Cys874–Cys891, Cys896–Cys908, Cys903–Cys921, Cys915–Cys932, Cys937–Cys949, Cys944–Cys962, Cys956–Cys972, Cys977–Cys990, Cys985–Cys1003, Cys997–Cys1012, Cys1016–Cys1028, Cys1023–Cys1041, Cys1035–Cys1052, Cys1063–Cys1076, Cys1070–Cys1089, Cys1083–Cys1098, Cys1105–Cys1119, Cys1113–Cys1132, Cys1126–Cys1141, Cys1146–Cys1160, Cys1153–Cys1173, and Cys1167–Cys1183. 6 residues coordinate Ca(2+): Trp872, Asp875, Asp877, Asp879, Asp885, and Glu886. Asn929 carries an N-linked (GlcNAc...) asparagine glycan. Ca(2+) contacts are provided by Trp1033, Asp1036, Asp1038, Asp1040, Asp1046, and Glu1047. Asn1051 carries an N-linked (GlcNAc...) asparagine glycan. Ca(2+) is bound by residues Trp1081, Asp1084, Asp1086, Asp1088, Asp1094, and Glu1095. The N-linked (GlcNAc...) asparagine glycan is linked to Asn1156. Asn1196 and Asn1219 each carry an N-linked (GlcNAc...) asparagine glycan. LDL-receptor class B repeat units lie at residues 1310–1356, 1357–1399, 1400–1446, 1447–1491, and 1492–1532; these read SALY…DWIA, GNIY…DPRD, GILF…DYLE, KRIL…YGGE, and VYWT…YHPS. HAT repeat units follow at residues 1380-1413 and 1470-1503; these read TTLL…SLPR and MEVL…NTLA. N-linked (GlcNAc...) asparagine glycans are attached at residues Asn1512, Asn1559, Asn1576, Asn1617, and Asn1646. LDL-receptor class B repeat units lie at residues 1628-1670, 1671-1714, 1715-1754, and 1755-1799; these read QRVY…DWVS, RNLF…HPLR, GKLY…DFPE, and SKLY…MGDK. An HAT 4 repeat occupies 1653-1684; the sequence is VVSADLPNAHGLAVDWVSRNLFWTSYDTNKKQ. 5 N-linked (GlcNAc...) asparagine glycosylation sites follow: Asn1724, Asn1734, Asn1764, Asn1826, and Asn1934. LDL-receptor class B repeat units lie at residues 1935-1977, 1978-2020, 2021-2064, and 2065-2108; these read DTIY…DWIA, GNIY…HPEK, GYLF…DYQG, and GKLY…FEDF. N-linked (GlcNAc...) asparagine glycosylation occurs at Asn1996. Lys2010 carries the N6-acetyllysine modification. A glycan (N-linked (GlcNAc...) asparagine) is linked at Asn2049. N-linked (GlcNAc...) asparagine glycans are attached at residues Asn2118 and Asn2128. 5 LDL-receptor class B repeats span residues 2254–2295, 2296–2344, 2345–2389, 2390–2432, and 2433–2474; these read NRIF…HRGW, DTLY…DECQ, NLMF…DHRA, EKLY…YGEH, and IFWT…VAND. HAT repeat units follow at residues 2277 to 2309, 2325 to 2358, and 2411 to 2444; these read TTIV…STIT, TVIT…LHPS, and HRYV…RAVQ. N-linked (GlcNAc...) asparagine glycosylation is found at Asn2473, Asn2503, and Asn2522. LDL-receptor class A domains follow at residues 2524–2563, 2566–2602, 2605–2641, 2639–2690, 2696–2732, 2734–2771, and 2774–2814; these read SCRA…SYCN, RCKK…IPCN, ACGV…MNCS, NCSA…RDCP, RCPL…THCN, FCSE…AHCE, and TCGP…AGCL. Cystine bridges form between Cys2525–Cys2538, Cys2533–Cys2551, Cys2545–Cys2562, Cys2567–Cys2579, Cys2574–Cys2592, and Cys2586–Cys2601. N-linked (GlcNAc...) asparagine glycosylation is present at Asn2602. Intrachain disulfides connect Cys2606–Cys2618, Cys2613–Cys2631, Cys2625–Cys2640, Cys2640–Cys2667, Cys2645–Cys2680, Cys2674–Cys2689, Cys2697–Cys2709, Cys2704–Cys2722, Cys2716–Cys2731, Cys2735–Cys2747, Cys2742–Cys2760, Cys2754–Cys2770, Cys2775–Cys2788, Cys2782–Cys2801, and Cys2795–Cys2813. N-linked (GlcNAc...) asparagine glycosylation is found at Asn2621 and Asn2639. The N-linked (GlcNAc...) asparagine glycan is linked to Asn2816. LDL-receptor class A domains lie at 2818–2855, 2858–2899, and 2904–2941; these read TCDD…PECE, TCGP…PHCT, and KCNA…RGCH. 11 cysteine pairs are disulfide-bonded: Cys2819–Cys2831, Cys2826–Cys2844, Cys2838–Cys2854, Cys2859–Cys2871, Cys2866–Cys2885, Cys2879–Cys2898, Cys2905–Cys2918, Cys2913–Cys2931, Cys2925–Cys2940, Cys2987–Cys2997, and Cys2993–Cys3006. The N-linked (GlcNAc...) asparagine glycan is linked to Asn2906. Residues 2983–3018 enclose the EGF-like 1; calcium-binding domain; sequence DVDECSTTFPCSQLCINTHGSYKCLCVEGYAPRGGD. N-linked (GlcNAc...) asparagine glycosylation is found at Asn3049 and Asn3090. 5 LDL-receptor class B repeats span residues 3070-3114, 3115-3157, 3158-3201, 3202-3244, and 3245-3285; these read QMIY…DWVG, GNLY…DVQN, GYLY…DYVT, ERIY…FEDY, and VYWT…FHAL. HAT repeat units lie at residues 3128-3171 and 3224-3256; these read EVSK…HSLI and RHVV…KSIN. Residues Asn3265 and Asn3334 are each glycosylated (N-linked (GlcNAc...) asparagine). LDL-receptor class A domains follow at residues 3334–3371, 3374–3410, 3413–3450, 3453–3491, 3494–3533, 3536–3572, 3575–3611, 3613–3649, 3654–3692, 3695–3733, and 3741–3778; these read NCTA…PDCP, KCRP…ANCD, VCLP…RDCP, TCAP…ANCT, TCGV…EECD, TCEP…ESCT, PCSE…KDCT, RCDM…EACG, TCPL…EECT, QCPP…EDCE, and HCKD…EDCS. 33 cysteine pairs are disulfide-bonded: Cys3335–Cys3347, Cys3342–Cys3360, Cys3354–Cys3370, Cys3375–Cys3387, Cys3382–Cys3400, Cys3394–Cys3409, Cys3414–Cys3427, Cys3421–Cys3440, Cys3434–Cys3449, Cys3454–Cys3467, Cys3461–Cys3480, Cys3474–Cys3490, Cys3495–Cys3508, Cys3502–Cys3521, Cys3515–Cys3532, Cys3537–Cys3549, Cys3544–Cys3562, Cys3556–Cys3571, Cys3576–Cys3588, Cys3583–Cys3601, Cys3595–Cys3610, Cys3614–Cys3626, Cys3621–Cys3639, Cys3633–Cys3648, Cys3655–Cys3667, Cys3662–Cys3680, Cys3674–Cys3691, Cys3696–Cys3710, Cys3704–Cys3723, Cys3717–Cys3732, Cys3742–Cys3755, Cys3750–Cys3768, and Cys3762–Cys3777. Asn3489 is a glycosylation site (N-linked (GlcNAc...) asparagine). Asn3663 carries an N-linked (GlcNAc...) asparagine glycan. N-linked (GlcNAc...) asparagine glycosylation is found at Asn3789 and Asn3840. An LDL-receptor class B 31 repeat occupies 3913 to 3925; that stretch reads GRVYWTNWHTGTI. A glycan (N-linked (GlcNAc...) asparagine) is linked at Asn3954. 3 LDL-receptor class B repeats span residues 3971 to 4013, 4014 to 4057, and 4058 to 4102; these read GNVY…DPLR, GTMY…DYHN, and ERLY…FEDY. One copy of the HAT 10 repeat lies at 3995-4027; it reads TLISGMIDEPHAIVVDPLRGTMYWSDWGNHPKI. N-linked (GlcNAc...) asparagine glycosylation is found at Asn4076, Asn4126, and Asn4180. 4 EGF-like domains span residues 4197 to 4230, 4233 to 4269, 4270 to 4302, and 4305 to 4341; these read RPGT…YTGD, ELDQ…PRCT, QQVC…FLGD, and QYRQ…TRCE. Disulfide bonds link Cys4201-Cys4211, Cys4205-Cys4221, Cys4237-Cys4247, Cys4241-Cys4257, Cys4259-Cys4268, Cys4273-Cys4283, Cys4277-Cys4293, Cys4309-Cys4319, Cys4313-Cys4329, and Cys4331-Cys4340. Residue Asn4280 is glycosylated (N-linked (GlcNAc...) asparagine). Asn4365 is a glycosylation site (N-linked (GlcNAc...) asparagine). Positions 4376 to 4410 constitute an EGF-like 6 domain; the sequence is LTCIDHCSNGGSCTMNSKMMPECQCPPHMTGPRCE. Disulfide bonds link Cys4378–Cys4388, Cys4382–Cys4398, and Cys4400–Cys4409. Residues 4425 to 4445 traverse the membrane as a helical segment; it reads ILIPLLLLLLLLLVAGVVFWY. Residues 4446-4545 lie on the Cytoplasmic side of the membrane; that stretch reads KRRVRGAKGF…PEDEIGDPLA (100 aa). Residues 4446-4545 are interaction with MAFB; the sequence is KRRVRGAKGF…PEDEIGDPLA (100 aa). Thr4461 is subject to Phosphothreonine. Tyr4508 bears the Phosphotyrosine mark. A phosphoserine mark is found at Ser4518, Ser4521, and Ser4524.

This sequence belongs to the LDLR family. As to quaternary structure, heterodimer of an 85-kDa membrane-bound carboxyl subunit and a non-covalently attached 515-kDa N-terminal subunit. Intracellular domain interacts with MAFB. Found in a complex with PID1/PCLI1, LRP1 and CUBNI. Interacts with SNX17, PID1/PCLI1, PDGF and CUBN. The intracellular domain interacts with SHC1, GULP1 and DAB1. Can weakly interact (via NPXY motif) with DAB2 (via PID domain); the interaction is enhanced by tyrosine phosphorylation of the NPXY motif. Interacts with MDK; promotes neuronal survival. Interacts with LRPAP1; this interaction is followed by rapid internalization. Interacts with uPA/PLAU and PAI1/SERPINE1, either individually or in complex with each other, leading to rapid endocytosis; this interaction is abolished in the presence of LRPAP1/RAP. Also interacts with tPA/PLAT alone or in complex with SERPINE1. Interacts with the urokinase receptor PLAUR; this interaction leads to PLAUR internalization and is impaired in the presence of SORL1. Interacts with PDGFB. Interacts with TAU/MAPT, leading to endocytosis; this interaction is reduced in the presence of LRPAP1/RAP. Interacts with IGFBP3. Interacts with ADGRG6. In terms of processing, cleaved into a 85 kDa membrane-spanning subunit (LRP-85) and a 515 kDa large extracellular domain (LRP-515) that remains non-covalently associated. Gamma-secretase-dependent cleavage of LRP-85 releases the intracellular domain from the membrane. Phosphorylated on serine and threonine residues. Post-translationally, phosphorylated on tyrosine residues upon stimulation with PDGF. Tyrosine phosphorylation promotes interaction with SHC1.

Its subcellular location is the cell membrane. The protein localises to the membrane. The protein resides in the coated pit. It localises to the golgi outpost. It is found in the cytoplasm. Its subcellular location is the cytoskeleton. The protein localises to the microtubule organizing center. The protein resides in the nucleus. Endocytic receptor involved in endocytosis and in phagocytosis of apoptotic cells. Required for early embryonic development. Involved in cellular lipid homeostasis. Involved in the plasma clearance of chylomicron remnants and activated LRPAP1 (alpha 2-macroglobulin), as well as the local metabolism of complexes between plasminogen activators and their endogenous inhibitors. Acts as an LRPAP1 alpha-2-macroglobulin receptor. Acts as a TAU/MAPT receptor and controls the endocytosis of TAU/MAPT as well as its subsequent spread. May modulate cellular events, such as APP metabolism, kinase-dependent intracellular signaling, neuronal calcium signaling as well as neurotransmission. Also acts as a receptor for IGFBP3 to mediate cell growth inhibition. The sequence is that of Prolow-density lipoprotein receptor-related protein 1 from Rattus norvegicus (Rat).